Consider the following 170-residue polypeptide: 3-hydroxyacyl-[acyl-carrier-protein] dehydratase FabZ (170 aa).

Residue H66 is part of the active site.

Belongs to the thioester dehydratase family. FabZ subfamily.

Its subcellular location is the cytoplasm. The enzyme catalyses a (3R)-hydroxyacyl-[ACP] = a (2E)-enoyl-[ACP] + H2O. Functionally, involved in unsaturated fatty acids biosynthesis. Catalyzes the dehydration of short chain beta-hydroxyacyl-ACPs and long chain saturated and unsaturated beta-hydroxyacyl-ACPs. The polypeptide is 3-hydroxyacyl-[acyl-carrier-protein] dehydratase FabZ (Granulibacter bethesdensis (strain ATCC BAA-1260 / CGDNIH1)).